A 292-amino-acid chain; its full sequence is uncharacterized protein (292 aa).

4 helical membrane-spanning segments follow: residues 17–37 (LFYTFVLVAWLFIGMILFPAL), 135–155 (LIAVLYALIGTPLFLTVIGQL), 166–186 (TTLWIVTIVYIFISAVIYDIV), and 216–236 (FHGVLPYCIVVLGLALITALY). A disordered region spans residues 267–292 (EKSEDKKSIVTSRIEEENEDEISDYE). Residues 282-292 (EENEDEISDYE) are compositionally biased toward acidic residues.

It is found in the membrane. This is an uncharacterized protein from Caenorhabditis elegans.